Reading from the N-terminus, the 433-residue chain is Enolase (433 aa).

A (2R)-2-phosphoglycerate-binding site is contributed by glutamine 164. Glutamate 206 (proton donor) is an active-site residue. Residues aspartate 243, glutamate 289, and aspartate 316 each contribute to the Mg(2+) site. The (2R)-2-phosphoglycerate site is built by lysine 341, arginine 370, serine 371, and lysine 392. The Proton acceptor role is filled by lysine 341.

The protein belongs to the enolase family. Mg(2+) serves as cofactor.

It localises to the cytoplasm. It is found in the secreted. The protein resides in the cell surface. It carries out the reaction (2R)-2-phosphoglycerate = phosphoenolpyruvate + H2O. The protein operates within carbohydrate degradation; glycolysis; pyruvate from D-glyceraldehyde 3-phosphate: step 4/5. Catalyzes the reversible conversion of 2-phosphoglycerate (2-PG) into phosphoenolpyruvate (PEP). It is essential for the degradation of carbohydrates via glycolysis. The chain is Enolase from Borreliella afzelii (strain PKo) (Borrelia afzelii).